We begin with the raw amino-acid sequence, 116 residues long: Large ribosomal subunit protein uL18 (116 aa).

Belongs to the universal ribosomal protein uL18 family. In terms of assembly, part of the 50S ribosomal subunit; part of the 5S rRNA/L5/L18/L25 subcomplex. Contacts the 5S and 23S rRNAs.

In terms of biological role, this is one of the proteins that bind and probably mediate the attachment of the 5S RNA into the large ribosomal subunit, where it forms part of the central protuberance. This is Large ribosomal subunit protein uL18 from Shewanella amazonensis (strain ATCC BAA-1098 / SB2B).